An 86-amino-acid polypeptide reads, in one-letter code: Small ribosomal subunit protein bS20 (86 aa).

This sequence belongs to the bacterial ribosomal protein bS20 family.

In terms of biological role, binds directly to 16S ribosomal RNA. The sequence is that of Small ribosomal subunit protein bS20 from Kocuria rhizophila (strain ATCC 9341 / DSM 348 / NBRC 103217 / DC2201).